A 488-amino-acid chain; its full sequence is ATP synthase subunit beta (488 aa).

164–171 (GGAGMGKT) provides a ligand contact to ATP.

This sequence belongs to the ATPase alpha/beta chains family. F-type ATPases have 2 components, CF(1) - the catalytic core - and CF(0) - the membrane proton channel. CF(1) has five subunits: alpha(3), beta(3), gamma(1), delta(1), epsilon(1). CF(0) has four main subunits: a(1), b(1), b'(1) and c(9-12).

Its subcellular location is the cellular thylakoid membrane. It catalyses the reaction ATP + H2O + 4 H(+)(in) = ADP + phosphate + 5 H(+)(out). Functionally, produces ATP from ADP in the presence of a proton gradient across the membrane. The catalytic sites are hosted primarily by the beta subunits. The chain is ATP synthase subunit beta from Synechococcus sp. (strain RCC307).